The sequence spans 303 residues: UDP-3-O-acyl-N-acetylglucosamine deacetylase (303 aa).

Positions 78, 237, and 241 each coordinate Zn(2+). The Proton donor role is filled by histidine 264.

It belongs to the LpxC family. The cofactor is Zn(2+).

The enzyme catalyses a UDP-3-O-[(3R)-3-hydroxyacyl]-N-acetyl-alpha-D-glucosamine + H2O = a UDP-3-O-[(3R)-3-hydroxyacyl]-alpha-D-glucosamine + acetate. It participates in glycolipid biosynthesis; lipid IV(A) biosynthesis; lipid IV(A) from (3R)-3-hydroxytetradecanoyl-[acyl-carrier-protein] and UDP-N-acetyl-alpha-D-glucosamine: step 2/6. Catalyzes the hydrolysis of UDP-3-O-myristoyl-N-acetylglucosamine to form UDP-3-O-myristoylglucosamine and acetate, the committed step in lipid A biosynthesis. This is UDP-3-O-acyl-N-acetylglucosamine deacetylase from Pseudomonas syringae pv. tomato (strain ATCC BAA-871 / DC3000).